Consider the following 572-residue polypeptide: Urease subunit alpha (572 aa).

One can recognise a Urease domain in the interval 136–572; that stretch reads GGIDTHIHWI…VPLAQRYFLF (437 aa). 3 residues coordinate Ni(2+): H141, H143, and K224. K224 is modified (N6-carboxylysine). H226 provides a ligand contact to substrate. 2 residues coordinate Ni(2+): H253 and H279. H327 (proton donor) is an active-site residue. Position 367 (D367) interacts with Ni(2+).

It belongs to the metallo-dependent hydrolases superfamily. Urease alpha subunit family. In terms of assembly, heterotrimer of UreA (gamma), UreB (beta) and UreC (alpha) subunits. Three heterotrimers associate to form the active enzyme. Ni cation serves as cofactor. Carboxylation allows a single lysine to coordinate two nickel ions.

The protein resides in the cytoplasm. It carries out the reaction urea + 2 H2O + H(+) = hydrogencarbonate + 2 NH4(+). Its pathway is nitrogen metabolism; urea degradation; CO(2) and NH(3) from urea (urease route): step 1/1. In Actinobacillus pleuropneumoniae serotype 7 (strain AP76), this protein is Urease subunit alpha.